The chain runs to 501 residues: Glycerol kinase (501 aa).

ADP is bound at residue Thr-12. Positions 12, 13, and 14 each coordinate ATP. Thr-12 lines the sn-glycerol 3-phosphate pocket. Arg-16 contributes to the ADP binding site. 4 residues coordinate sn-glycerol 3-phosphate: Arg-82, Glu-83, Tyr-134, and Asp-244. Positions 82, 83, 134, 244, and 245 each coordinate glycerol. 2 residues coordinate ADP: Thr-266 and Gly-310. ATP contacts are provided by Thr-266, Gly-310, Gln-314, and Gly-411. ADP is bound by residues Gly-411 and Asn-415.

The protein belongs to the FGGY kinase family.

The enzyme catalyses glycerol + ATP = sn-glycerol 3-phosphate + ADP + H(+). It participates in polyol metabolism; glycerol degradation via glycerol kinase pathway; sn-glycerol 3-phosphate from glycerol: step 1/1. With respect to regulation, inhibited by fructose 1,6-bisphosphate (FBP). Key enzyme in the regulation of glycerol uptake and metabolism. Catalyzes the phosphorylation of glycerol to yield sn-glycerol 3-phosphate. The protein is Glycerol kinase of Methylorubrum populi (strain ATCC BAA-705 / NCIMB 13946 / BJ001) (Methylobacterium populi).